A 511-amino-acid chain; its full sequence is 2-isopropylmalate synthase (511 aa).

The Pyruvate carboxyltransferase domain occupies 4-266 (IRIFDTTLRD…ETGIDLSQLY (263 aa)). Mn(2+) contacts are provided by D13, H201, H203, and N237. The tract at residues 391 to 511 (VLEKIRVVSG…IAANARAQKN (121 aa)) is regulatory domain.

It belongs to the alpha-IPM synthase/homocitrate synthase family. LeuA type 1 subfamily. As to quaternary structure, homodimer. The cofactor is Mn(2+).

The protein localises to the cytoplasm. The enzyme catalyses 3-methyl-2-oxobutanoate + acetyl-CoA + H2O = (2S)-2-isopropylmalate + CoA + H(+). Its pathway is amino-acid biosynthesis; L-leucine biosynthesis; L-leucine from 3-methyl-2-oxobutanoate: step 1/4. In terms of biological role, catalyzes the condensation of the acetyl group of acetyl-CoA with 3-methyl-2-oxobutanoate (2-ketoisovalerate) to form 3-carboxy-3-hydroxy-4-methylpentanoate (2-isopropylmalate). This is 2-isopropylmalate synthase from Acetivibrio thermocellus (strain ATCC 27405 / DSM 1237 / JCM 9322 / NBRC 103400 / NCIMB 10682 / NRRL B-4536 / VPI 7372) (Clostridium thermocellum).